Reading from the N-terminus, the 335-residue chain is Methionine import ATP-binding protein MetN (335 aa).

The ABC transporter domain occupies 2 to 241; it reads IEFQRLHKSY…PKHVTTRRFV (240 aa). Residue 38–45 coordinates ATP; that stretch reads GHSGAGKS.

This sequence belongs to the ABC transporter superfamily. Methionine importer (TC 3.A.1.24) family. In terms of assembly, the complex is composed of two ATP-binding proteins (MetN), two transmembrane proteins (MetI) and a solute-binding protein (MetQ).

The protein resides in the cell inner membrane. The enzyme catalyses L-methionine(out) + ATP + H2O = L-methionine(in) + ADP + phosphate + H(+). It catalyses the reaction D-methionine(out) + ATP + H2O = D-methionine(in) + ADP + phosphate + H(+). Part of the ABC transporter complex MetNIQ involved in methionine import. Responsible for energy coupling to the transport system. The sequence is that of Methionine import ATP-binding protein MetN from Xanthomonas oryzae pv. oryzae (strain KACC10331 / KXO85).